Reading from the N-terminus, the 386-residue chain is ATP phosphoribosyltransferase regulatory subunit (386 aa).

The protein belongs to the class-II aminoacyl-tRNA synthetase family. HisZ subfamily. As to quaternary structure, heteromultimer composed of HisG and HisZ subunits.

The protein localises to the cytoplasm. The protein operates within amino-acid biosynthesis; L-histidine biosynthesis; L-histidine from 5-phospho-alpha-D-ribose 1-diphosphate: step 1/9. In terms of biological role, required for the first step of histidine biosynthesis. May allow the feedback regulation of ATP phosphoribosyltransferase activity by histidine. The sequence is that of ATP phosphoribosyltransferase regulatory subunit from Ralstonia nicotianae (strain ATCC BAA-1114 / GMI1000) (Ralstonia solanacearum).